The chain runs to 114 residues: Protein ORF3 (114 aa).

Positions 1–28 (MGSRPCALGLFCCCSSCFCLCCPRHRPV) are membrane association. 2 hydrophobic regions span residues 6–22 (CALGLFCCCSSCFCLCC) and 33–53 (AAVGGAAAVPAVVSGVTGLIL). The segment at 6–22 (CALGLFCCCSSCFCLCC) is induction of host SIRPA expression. The segment at 28–68 (VSRLAAAVGGAAAVPAVVSGVTGLILSPSQSPIFIQPTPSP) is interaction with host HPX. The segment at 48 to 72 (VTGLILSPSQSPIFIQPTPSPPMSP) is interaction with the capsid protein. Ser-71 is modified (phosphoserine; by host). Positions 72–114 (PLRPGLDLVFANPPDHSAPLGVTRPSAPPLPHVVDLPQLGPRR) are homodimerization, and interaction with host AMBP/bikunin. The tract at residues 91-114 (LGVTRPSAPPLPHVVDLPQLGPRR) is disordered. The segment at 95–104 (RPSAPPLPHV) is interaction with host SRC, HCK, FYN, PIK3R3 and GRB2. Positions 96-99 (PSAP) match the PTAP/PSAP motif motif.

This sequence belongs to the hepevirus ORF3 protein family. Forms homooligomers. Interacts with host SRC, HCK, FYN, PIK3R3 and GRB2 (via SH3 domain); binding does not activate the kinases. Interacts with host AMBP/bikunin and AMBP/alpha-1-microglobulin peptides. Interacts with host HPX/hemopexin. Interacts (when phosphorylated) with capsid protein ORF2. Interacts with host TSG101; this interaction plays a role in viral release from the host cell. Interacts with host SIRPA; this interaction down-regulates the phosphorylation of host IRF3. Post-translationally, palmitoylated in the N-terminus.

Its subcellular location is the host endoplasmic reticulum membrane. It localises to the host cytoplasm. The protein resides in the host cytoskeleton. The protein localises to the virion. It is found in the host cell membrane. Its function is as follows. Small multifunctional phosphoprotein involved in virion morphogenesis, egress and counteracting host innate immunity. Plays critical roles in the final steps of viral release by interacting with host TSG101, a member of the vacuolar protein-sorting pathway and using other cellular host proteins involved in vesicle formation pathway. Also acts as a viroporin and forms ion conductive pores allowing viral particle release. Impairs the generation of type I interferon by down-regulating host TLR3 and TLR7 as well as their downstream signaling pathways. Down-regulates the phosphorylation of host IRF3 via the interaction with host SIRP-alpha, thereby inhibiting IFN-I expression. Interacts with host microtubules. The polypeptide is Protein ORF3 (Hepatitis E virus genotype 1 (isolate Human/China/HeBei/1987) (HEV)).